The primary structure comprises 139 residues: ATP synthase epsilon chain (139 aa).

Belongs to the ATPase epsilon chain family. In terms of assembly, F-type ATPases have 2 components, CF(1) - the catalytic core - and CF(0) - the membrane proton channel. CF(1) has five subunits: alpha(3), beta(3), gamma(1), delta(1), epsilon(1). CF(0) has three main subunits: a, b and c.

Its subcellular location is the cell membrane. Its function is as follows. Produces ATP from ADP in the presence of a proton gradient across the membrane. This is ATP synthase epsilon chain from Ligilactobacillus salivarius (strain UCC118) (Lactobacillus salivarius).